The primary structure comprises 246 residues: MNTQTALRLGVNIDHIATIRQARGTPYPDLVEAVRIVEEAGADIITLHLREDRRHIQDRDVEMLRERITTGMNLEMAATEEMQAIALRIRPQACCIVPERREELTTEGGLDVLGQEARLKAFCAPLLAAGIEVSLFVEPDLAHLDAALRIGAPVVELHTGAYASAAPGPDREAHLERIVAAAAHGHARGLVVNAGHGLDYENVLPIAAIPVMHELNIGHAIVARALFTGIGEAVRAMRAAMDRARR.

Residue Asn-12 coordinates 3-amino-2-oxopropyl phosphate. 14–15 (DH) provides a ligand contact to 1-deoxy-D-xylulose 5-phosphate. Residue Arg-23 participates in 3-amino-2-oxopropyl phosphate binding. The active-site Proton acceptor is His-48. Positions 50 and 55 each coordinate 1-deoxy-D-xylulose 5-phosphate. Glu-75 functions as the Proton acceptor in the catalytic mechanism. Thr-105 contacts 1-deoxy-D-xylulose 5-phosphate. Catalysis depends on His-196, which acts as the Proton donor. Residues Gly-197 and 218–219 (GH) contribute to the 3-amino-2-oxopropyl phosphate site.

Belongs to the PNP synthase family. In terms of assembly, homooctamer; tetramer of dimers.

Its subcellular location is the cytoplasm. The enzyme catalyses 3-amino-2-oxopropyl phosphate + 1-deoxy-D-xylulose 5-phosphate = pyridoxine 5'-phosphate + phosphate + 2 H2O + H(+). Its pathway is cofactor biosynthesis; pyridoxine 5'-phosphate biosynthesis; pyridoxine 5'-phosphate from D-erythrose 4-phosphate: step 5/5. Functionally, catalyzes the complicated ring closure reaction between the two acyclic compounds 1-deoxy-D-xylulose-5-phosphate (DXP) and 3-amino-2-oxopropyl phosphate (1-amino-acetone-3-phosphate or AAP) to form pyridoxine 5'-phosphate (PNP) and inorganic phosphate. The protein is Pyridoxine 5'-phosphate synthase of Thioalkalivibrio sulfidiphilus (strain HL-EbGR7).